The sequence spans 62 residues: UPF0434 protein FTL_1400 (62 aa).

The protein belongs to the UPF0434 family.

The chain is UPF0434 protein FTL_1400 from Francisella tularensis subsp. holarctica (strain LVS).